The following is a 160-amino-acid chain: Protein-export protein SecB (160 aa).

Belongs to the SecB family. As to quaternary structure, homotetramer, a dimer of dimers. One homotetramer interacts with 1 SecA dimer.

Its subcellular location is the cytoplasm. In terms of biological role, one of the proteins required for the normal export of preproteins out of the cell cytoplasm. It is a molecular chaperone that binds to a subset of precursor proteins, maintaining them in a translocation-competent state. It also specifically binds to its receptor SecA. The protein is Protein-export protein SecB of Burkholderia lata (strain ATCC 17760 / DSM 23089 / LMG 22485 / NCIMB 9086 / R18194 / 383).